A 373-amino-acid polypeptide reads, in one-letter code: tRNA-specific 2-thiouridylase MnmA (373 aa).

Residues 12–19 and Met38 contribute to the ATP site; that span reads GMSGGVDS. Residues 98–100 form an interaction with target base in tRNA region; it reads NPD. Cys103 (nucleophile) is an active-site residue. Cys103 and Cys200 are oxidised to a cystine. Gly127 contacts ATP. Positions 150–152 are interaction with tRNA; sequence KDQ. The active-site Cysteine persulfide intermediate is Cys200. The interaction with tRNA stretch occupies residues 312-313; the sequence is RY.

This sequence belongs to the MnmA/TRMU family.

The protein resides in the cytoplasm. The enzyme catalyses S-sulfanyl-L-cysteinyl-[protein] + uridine(34) in tRNA + AH2 + ATP = 2-thiouridine(34) in tRNA + L-cysteinyl-[protein] + A + AMP + diphosphate + H(+). Catalyzes the 2-thiolation of uridine at the wobble position (U34) of tRNA, leading to the formation of s(2)U34. This chain is tRNA-specific 2-thiouridylase MnmA, found in Streptococcus agalactiae serotype Ia (strain ATCC 27591 / A909 / CDC SS700).